The sequence spans 882 residues: Leucine--tRNA ligase (882 aa).

The 'HIGH' region motif lies at 43–53; that stretch reads PYPSGRIHMGH. Residues 634-638 carry the 'KMSKS' region motif; that stretch reads KMSKS. Lys637 is a binding site for ATP.

It belongs to the class-I aminoacyl-tRNA synthetase family.

It localises to the cytoplasm. It carries out the reaction tRNA(Leu) + L-leucine + ATP = L-leucyl-tRNA(Leu) + AMP + diphosphate. This Rhodopseudomonas palustris (strain BisB18) protein is Leucine--tRNA ligase.